A 240-amino-acid chain; its full sequence is Cysteine-rich venom protein triflin (240 aa).

Positions 1–19 (MIAFIVLPILAAVLQQSSG) are cleaved as a signal peptide. Positions 39-166 (DLHNSLRRSV…KYSYFYVCQY (128 aa)) constitute an SCP domain. Intrachain disulfides connect Cys75/Cys153, Cys92/Cys167, Cys148/Cys164, Cys186/Cys193, Cys189/Cys198, Cys202/Cys235, Cys211/Cys229, and Cys220/Cys233. The ShKT domain occupies 202–235 (CTRENEFTNCDSLVQKSSCQDNYMKSKCPASCFC).

Belongs to the CRISP family. In terms of assembly, forms a stable, non-covalent complex with SSP-2. In terms of tissue distribution, expressed by the venom gland.

It is found in the secreted. In terms of biological role, blocks contraction of smooth muscle elicited by high potassium-induced depolarization. May target voltage-gated calcium channels (Cav) on smooth muscle. In Protobothrops flavoviridis (Habu), this protein is Cysteine-rich venom protein triflin.